We begin with the raw amino-acid sequence, 204 residues long: Urease accessory protein UreG (204 aa).

Residue 12–19 (GPVGSGKT) coordinates GTP.

Belongs to the SIMIBI class G3E GTPase family. UreG subfamily. As to quaternary structure, homodimer. UreD, UreF and UreG form a complex that acts as a GTP-hydrolysis-dependent molecular chaperone, activating the urease apoprotein by helping to assemble the nickel containing metallocenter of UreC. The UreE protein probably delivers the nickel.

It localises to the cytoplasm. Functionally, facilitates the functional incorporation of the urease nickel metallocenter. This process requires GTP hydrolysis, probably effectuated by UreG. The chain is Urease accessory protein UreG from Pseudomonas fluorescens (strain Pf0-1).